Consider the following 285-residue polypeptide: tRNA U34 carboxymethyltransferase (285 aa).

Carboxy-S-adenosyl-L-methionine is bound by residues lysine 56, tryptophan 70, lysine 75, glycine 94, 143 to 144 (VE), tyrosine 163, and arginine 278.

The protein belongs to the class I-like SAM-binding methyltransferase superfamily. CmoB family. In terms of assembly, homotetramer.

The catalysed reaction is carboxy-S-adenosyl-L-methionine + 5-hydroxyuridine(34) in tRNA = 5-carboxymethoxyuridine(34) in tRNA + S-adenosyl-L-homocysteine + H(+). In terms of biological role, catalyzes carboxymethyl transfer from carboxy-S-adenosyl-L-methionine (Cx-SAM) to 5-hydroxyuridine (ho5U) to form 5-carboxymethoxyuridine (cmo5U) at position 34 in tRNAs. In Campylobacter hominis (strain ATCC BAA-381 / DSM 21671 / CCUG 45161 / LMG 19568 / NCTC 13146 / CH001A), this protein is tRNA U34 carboxymethyltransferase.